The chain runs to 293 residues: Ankyrin repeat and SOCS box protein 11 (293 aa).

ANK repeat units lie at residues 36–65 (DDRT…NVGM), 69–98 (DGIT…DANA), 102–131 (DGAT…AHHP), 134–163 (LLCS…NVDM), 167–196 (SVGT…DVQC), 199–228 (GLDT…DRTS), and 232–259 (EGKT…SLSQ). Residues 244–293 (SIKHLLQTAGTCSLSQLCRWCIRRSLGQKGLNKTKTLCLPHMLHNYLLYH) enclose the SOCS box domain.

Belongs to the ankyrin SOCS box (ASB) family. In terms of assembly, substrate-recognition component of the ECS(ASB11) complex, composed of asb11, cul5, elob, eloc and rnf7/rbx2. In terms of tissue distribution, expressed in the developing nervous system: localizes to neural plate margins and is abutting the proneuronal zone.

Its subcellular location is the endoplasmic reticulum. It functions in the pathway protein modification; protein ubiquitination. Functionally, substrate-recognition component of a cullin-5-RING E3 ubiquitin-protein ligase complex (ECS complex, also named CRL5 complex), which mediates the ubiquitination and subsequent proteasomal degradation of target proteins. Acts as a regulator of the neuronal progenitor compartment size by maintaining the neural precursors in the proliferating undifferentiated state. The ECS(ASB11) complex acts as a positive regulator of Notch signaling pathway by mediating ubiquitination and degradation of DeltaA (dla). Also acts as a regulator of regenerative myogenesis. This is Ankyrin repeat and SOCS box protein 11 from Danio rerio (Zebrafish).